The chain runs to 277 residues: 2-dehydro-3-deoxyphosphooctonate aldolase (277 aa).

It belongs to the KdsA family.

It is found in the cytoplasm. The enzyme catalyses D-arabinose 5-phosphate + phosphoenolpyruvate + H2O = 3-deoxy-alpha-D-manno-2-octulosonate-8-phosphate + phosphate. It participates in carbohydrate biosynthesis; 3-deoxy-D-manno-octulosonate biosynthesis; 3-deoxy-D-manno-octulosonate from D-ribulose 5-phosphate: step 2/3. The protein operates within bacterial outer membrane biogenesis; lipopolysaccharide biosynthesis. The polypeptide is 2-dehydro-3-deoxyphosphooctonate aldolase (Brucella canis (strain ATCC 23365 / NCTC 10854 / RM-666)).